Reading from the N-terminus, the 874-residue chain is Isopimaradiene synthase, chloroplastic (874 aa).

Over residues 1–12 (MALPSSSLSSRI) the composition is skewed to polar residues. Residues 1 to 20 (MALPSSSLSSRIPTGPHPLT) form a disordered region. The transit peptide at 1–37 (MALPSSSLSSRIPTGPHPLTHTQCIPHFSTTINAGIS) directs the protein to the chloroplast. Mg(2+) is bound by residues Asp407, Asp409, Asp626, Asp630, Asn770, and Glu778. The DXDD motif signature appears at 407 to 410 (DIDD). A DDXXD motif motif is present at residues 626-630 (DDLYD).

This sequence belongs to the terpene synthase family. Tpsd subfamily. Mg(2+) is required as a cofactor. It depends on Mn(2+) as a cofactor.

The protein resides in the plastid. It localises to the chloroplast. The catalysed reaction is (+)-copalyl diphosphate = isopimara-8(14),15-diene + diphosphate. Its pathway is terpene metabolism; oleoresin biosynthesis. Terpene synthase (TPS) involved in the biosynthesis of diterpene natural products included in conifer oleoresin secretions and volatile emissions; these compounds contribute to biotic and abiotic stress defense against herbivores and pathogens. Catalyzes the conversion of (+)-copalyl diphosphate ((+)-CPP) to isopimaradiene. The protein is Isopimaradiene synthase, chloroplastic of Picea sitchensis (Sitka spruce).